The following is a 396-amino-acid chain: Mevalonate kinase (396 aa).

Residues Lys13, Asn55, Ser135, and 140–146 each bind ATP; that span reads GAGLGSS. Catalysis depends on Ser146, which acts as the Proton donor. Mg(2+)-binding residues include Ser146 and Glu193. The active-site Proton acceptor is the Asp204.

Belongs to the GHMP kinase family. Mevalonate kinase subfamily. Homodimer. Mg(2+) serves as cofactor.

The protein resides in the cytoplasm. Its subcellular location is the peroxisome. It catalyses the reaction (R)-mevalonate + ATP = (R)-5-phosphomevalonate + ADP + H(+). It functions in the pathway isoprenoid biosynthesis; isopentenyl diphosphate biosynthesis via mevalonate pathway; isopentenyl diphosphate from (R)-mevalonate: step 1/3. With respect to regulation, farnesyl pyrophosphate and geranyl pyrophosphate inhibit mevalonate kinase activity by binding competitively at the ATP-binding sites. Its function is as follows. Catalyzes the phosphorylation of mevalonate to mevalonate 5-phosphate, a key step in isoprenoid and cholesterol biosynthesis. The chain is Mevalonate kinase from Homo sapiens (Human).